The primary structure comprises 470 residues: Na(+)-translocating NADH-quinone reductase subunit A (470 aa).

The protein belongs to the NqrA family. Composed of six subunits; NqrA, NqrB, NqrC, NqrD, NqrE and NqrF.

It carries out the reaction a ubiquinone + n Na(+)(in) + NADH + H(+) = a ubiquinol + n Na(+)(out) + NAD(+). Functionally, NQR complex catalyzes the reduction of ubiquinone-1 to ubiquinol by two successive reactions, coupled with the transport of Na(+) ions from the cytoplasm to the periplasm. NqrA to NqrE are probably involved in the second step, the conversion of ubisemiquinone to ubiquinol. The chain is Na(+)-translocating NADH-quinone reductase subunit A from Chlamydia caviae (strain ATCC VR-813 / DSM 19441 / 03DC25 / GPIC) (Chlamydophila caviae).